The primary structure comprises 946 residues: Bifunctional glutamine synthetase adenylyltransferase/adenylyl-removing enzyme (946 aa).

Residues 1 to 440 (MKPLSSPLQQ…VFNELIGDDE (440 aa)) are adenylyl removase. Positions 449-946 (SEQWRELWQD…ASWQKWLVEE (498 aa)) are adenylyl transferase.

The protein belongs to the GlnE family. Requires Mg(2+) as cofactor.

The enzyme catalyses [glutamine synthetase]-O(4)-(5'-adenylyl)-L-tyrosine + phosphate = [glutamine synthetase]-L-tyrosine + ADP. The catalysed reaction is [glutamine synthetase]-L-tyrosine + ATP = [glutamine synthetase]-O(4)-(5'-adenylyl)-L-tyrosine + diphosphate. In terms of biological role, involved in the regulation of glutamine synthetase GlnA, a key enzyme in the process to assimilate ammonia. When cellular nitrogen levels are high, the C-terminal adenylyl transferase (AT) inactivates GlnA by covalent transfer of an adenylyl group from ATP to specific tyrosine residue of GlnA, thus reducing its activity. Conversely, when nitrogen levels are low, the N-terminal adenylyl removase (AR) activates GlnA by removing the adenylyl group by phosphorolysis, increasing its activity. The regulatory region of GlnE binds the signal transduction protein PII (GlnB) which indicates the nitrogen status of the cell. The chain is Bifunctional glutamine synthetase adenylyltransferase/adenylyl-removing enzyme from Shigella boydii serotype 18 (strain CDC 3083-94 / BS512).